The sequence spans 199 residues: MYTRPLARLIEELQRLPGIGSKTAQRLALHLLNRPAGEVEALAKALLEAKQTVKHCSICFNWSAEDPCEICRSPQRDPSTWCVVADVKDLIAMERTREFKGLYHVLGGLISPMNGIGAEQLRIRELVARVAREKPQELIFALSPSVEGEVTMHVVKDYLKPVAPGLRMTRLAFGLPMGSELEYADEVTLARALEARQEF.

A C4-type zinc finger spans residues 56–71 (CSICFNWSAEDPCEIC). The Toprim domain occupies 79–174 (STWCVVADVK…GLRMTRLAFG (96 aa)).

It belongs to the RecR family.

Its function is as follows. May play a role in DNA repair. It seems to be involved in an RecBC-independent recombinational process of DNA repair. It may act with RecF and RecO. The polypeptide is Recombination protein RecR (Synechococcus sp. (strain JA-3-3Ab) (Cyanobacteria bacterium Yellowstone A-Prime)).